We begin with the raw amino-acid sequence, 490 residues long: Protein nucleotidyltransferase YdiU (490 aa).

The ATP site is built by Gly-92, Gly-94, Arg-95, Lys-114, Asp-126, Gly-127, Arg-177, and Arg-184. Asp-256 serves as the catalytic Proton acceptor. Mg(2+) contacts are provided by Asn-257 and Asp-266. Residue Asp-266 coordinates ATP.

Belongs to the SELO family. The cofactor is Mg(2+). It depends on Mn(2+) as a cofactor.

The catalysed reaction is L-seryl-[protein] + ATP = 3-O-(5'-adenylyl)-L-seryl-[protein] + diphosphate. It carries out the reaction L-threonyl-[protein] + ATP = 3-O-(5'-adenylyl)-L-threonyl-[protein] + diphosphate. It catalyses the reaction L-tyrosyl-[protein] + ATP = O-(5'-adenylyl)-L-tyrosyl-[protein] + diphosphate. The enzyme catalyses L-histidyl-[protein] + UTP = N(tele)-(5'-uridylyl)-L-histidyl-[protein] + diphosphate. The catalysed reaction is L-seryl-[protein] + UTP = O-(5'-uridylyl)-L-seryl-[protein] + diphosphate. It carries out the reaction L-tyrosyl-[protein] + UTP = O-(5'-uridylyl)-L-tyrosyl-[protein] + diphosphate. In terms of biological role, nucleotidyltransferase involved in the post-translational modification of proteins. It can catalyze the addition of adenosine monophosphate (AMP) or uridine monophosphate (UMP) to a protein, resulting in modifications known as AMPylation and UMPylation. This is Protein nucleotidyltransferase YdiU from Bordetella avium (strain 197N).